A 272-amino-acid polypeptide reads, in one-letter code: Shikimate dehydrogenase (NADP(+)) (272 aa).

Residues 14-16 (SKS) and T61 each bind shikimate. K65 serves as the catalytic Proton acceptor. NADP(+) is bound at residue E77. Residues N86 and D102 each contribute to the shikimate site. Residues 126–130 (GAGGA), 149–154 (NRTVFR), and M213 each bind NADP(+). Y215 contributes to the shikimate binding site. G237 is an NADP(+) binding site.

It belongs to the shikimate dehydrogenase family. As to quaternary structure, homodimer.

It catalyses the reaction shikimate + NADP(+) = 3-dehydroshikimate + NADPH + H(+). The protein operates within metabolic intermediate biosynthesis; chorismate biosynthesis; chorismate from D-erythrose 4-phosphate and phosphoenolpyruvate: step 4/7. Involved in the biosynthesis of the chorismate, which leads to the biosynthesis of aromatic amino acids. Catalyzes the reversible NADPH linked reduction of 3-dehydroshikimate (DHSA) to yield shikimate (SA). This is Shikimate dehydrogenase (NADP(+)) from Escherichia coli O127:H6 (strain E2348/69 / EPEC).